We begin with the raw amino-acid sequence, 299 residues long: Phosphoribosylaminoimidazole-succinocarboxamide synthase (299 aa).

Residues 259-279 (PESGWDRKSEQPPPPLPQHVV) are disordered.

Belongs to the SAICAR synthetase family.

It carries out the reaction 5-amino-1-(5-phospho-D-ribosyl)imidazole-4-carboxylate + L-aspartate + ATP = (2S)-2-[5-amino-1-(5-phospho-beta-D-ribosyl)imidazole-4-carboxamido]succinate + ADP + phosphate + 2 H(+). The protein operates within purine metabolism; IMP biosynthesis via de novo pathway; 5-amino-1-(5-phospho-D-ribosyl)imidazole-4-carboxamide from 5-amino-1-(5-phospho-D-ribosyl)imidazole-4-carboxylate: step 1/2. The polypeptide is Phosphoribosylaminoimidazole-succinocarboxamide synthase (Streptomyces avermitilis (strain ATCC 31267 / DSM 46492 / JCM 5070 / NBRC 14893 / NCIMB 12804 / NRRL 8165 / MA-4680)).